The following is a 295-amino-acid chain: tRNA dimethylallyltransferase (295 aa).

11-18 (GPTVSGKS) lines the ATP pocket. 13 to 18 (TVSGKS) contacts substrate. 2 interaction with substrate tRNA regions span residues 36-39 (DSMQ) and 158-162 (QRIIR).

This sequence belongs to the IPP transferase family. In terms of assembly, monomer. The cofactor is Mg(2+).

It carries out the reaction adenosine(37) in tRNA + dimethylallyl diphosphate = N(6)-dimethylallyladenosine(37) in tRNA + diphosphate. In terms of biological role, catalyzes the transfer of a dimethylallyl group onto the adenine at position 37 in tRNAs that read codons beginning with uridine, leading to the formation of N6-(dimethylallyl)adenosine (i(6)A). The sequence is that of tRNA dimethylallyltransferase from Bartonella quintana (strain Toulouse) (Rochalimaea quintana).